Reading from the N-terminus, the 404-residue chain is Spore germination protein YndF (404 aa).

A signal peptide spans 1 to 24 (MKSKLKRQLPAMVIVCLLMICVTG). Residue Cys25 is the site of N-palmitoyl cysteine attachment. The S-diacylglycerol cysteine moiety is linked to residue Cys25.

It belongs to the GerABKC lipoprotein family.

It localises to the cell membrane. In terms of biological role, may be involved in spore germination. This Bacillus subtilis (strain 168) protein is Spore germination protein YndF (yndF).